The primary structure comprises 21 residues: Cardiotoxin-like basic polypeptide ah (21 aa).

The protein belongs to the three-finger toxin family. Short-chain subfamily. Orphan group XV sub-subfamily. Post-translationally, contains 4 disulfide bonds. Expressed by the venom gland.

Its subcellular location is the secreted. It localises to the target cell membrane. In terms of biological role, has hemolytic activity under low-lecithin conditions. Has low cytotoxic activity. Inhibits the expression of VEGF and bFGF in human non-small-cell lung cancer cell line NCI-H1299 in a dose-dependent manner. This is Cardiotoxin-like basic polypeptide ah from Naja atra (Chinese cobra).